The following is an 806-amino-acid chain: Ribonucleoside-diphosphate reductase large subunit-like protein (806 aa).

Belongs to the ribonucleoside diphosphate reductase large chain family.

Its subcellular location is the virion. It is found in the host cytoplasm. In terms of biological role, does not possess a ribonucleotide reductase activity. Betaherpesviruses probably use another strategy to expand the dNTP pool in a quiescent host cell. The sequence is that of Ribonucleoside-diphosphate reductase large subunit-like protein from Human herpesvirus 7 (strain JI) (HHV-7).